We begin with the raw amino-acid sequence, 514 residues long: Probable E3 ubiquitin-protein ligase ARI10 (514 aa).

Over residues 1–18 the composition is skewed to acidic residues; it reads MDYSDDDMIDNESGEENN. Residues 1-26 form a disordered region; it reads MDYSDDDMIDNESGEENNSDGGGNES. The TRIAD supradomain stretch occupies residues 117-322; sequence VDIQCGICFE…SDHYACNNYV (206 aa). Residues cysteine 121, cysteine 124, cysteine 138, histidine 140, cysteine 143, cysteine 146, cysteine 166, cysteine 171, cysteine 210, cysteine 215, cysteine 231, cysteine 233, cysteine 238, cysteine 241, histidine 246, cysteine 251, cysteine 278, and cysteine 281 each contribute to the Zn(2+) site. The segment at 121-171 adopts an RING-type 1 zinc-finger fold; the sequence is CGICFESYTRKEIASVSCGHPYCKTCWTGYITTKIEDGPGCLRVKCPEPSC. The IBR-type zinc finger occupies 190–251; that stretch reads DKYYRYFLRS…SEDAHSPVDC (62 aa). Residues 278 to 308 form an RING-type 2; atypical zinc finger; sequence CPKCKRPIEKSHGCNHMTCSASCGHRFCWIC. Cysteine 291 is a catalytic residue. Cysteine 296, cysteine 300, cysteine 305, cysteine 308, histidine 315, and cysteine 318 together coordinate Zn(2+).

Belongs to the RBR family. Ariadne subfamily. Zn(2+) serves as cofactor.

The catalysed reaction is [E2 ubiquitin-conjugating enzyme]-S-ubiquitinyl-L-cysteine + [acceptor protein]-L-lysine = [E2 ubiquitin-conjugating enzyme]-L-cysteine + [acceptor protein]-N(6)-ubiquitinyl-L-lysine.. It functions in the pathway protein modification; protein ubiquitination. In terms of biological role, might act as an E3 ubiquitin-protein ligase, or as part of E3 complex, which accepts ubiquitin from specific E2 ubiquitin-conjugating enzymes and then transfers it to substrates. The protein is Probable E3 ubiquitin-protein ligase ARI10 (ARI10) of Arabidopsis thaliana (Mouse-ear cress).